The primary structure comprises 184 residues: ADP-ribosylation factor-like protein 2 (184 aa).

Residue Gly2 is the site of N-myristoyl glycine attachment. Residues 23–30 (GLDNAGKT), 66–70 (DIGGQ), and 125–128 (NKQD) contribute to the GTP site.

The protein belongs to the small GTPase superfamily. Arf family.

Functionally, may be involved in trafficking events within the endosomal system. This chain is ADP-ribosylation factor-like protein 2 (arl2), found in Dictyostelium discoideum (Social amoeba).